The primary structure comprises 426 residues: Histidine--tRNA ligase 1 (426 aa).

It belongs to the class-II aminoacyl-tRNA synthetase family. Homodimer.

The protein localises to the cytoplasm. The enzyme catalyses tRNA(His) + L-histidine + ATP = L-histidyl-tRNA(His) + AMP + diphosphate + H(+). The protein is Histidine--tRNA ligase 1 of Shouchella clausii (strain KSM-K16) (Alkalihalobacillus clausii).